The primary structure comprises 467 residues: Transcriptional modulator WTM2 (467 aa).

Residues 1 to 12 (MAKSKSSQGASG) show a composition bias toward low complexity. Disordered stretches follow at residues 1–22 (MAKS…PSLY) and 84–121 (TFYD…AFQD). The span at 87–100 (DDDDDDDNDDDDEE) shows a compositional bias: acidic residues. 3 WD repeats span residues 244–282 (PGTN…KPLW), 287–327 (PKNG…LATT), and 349–389 (SGGD…SRND).

Functionally, transcriptional modulator with roles in meiotic regulation and silencing. The sequence is that of Transcriptional modulator WTM2 (WTM2) from Saccharomyces cerevisiae (strain ATCC 204508 / S288c) (Baker's yeast).